The chain runs to 851 residues: DNA mismatch repair protein MutS (851 aa).

Residue 602–609 (GPNMSGKS) participates in ATP binding.

It belongs to the DNA mismatch repair MutS family.

In terms of biological role, this protein is involved in the repair of mismatches in DNA. It is possible that it carries out the mismatch recognition step. This protein has a weak ATPase activity. The polypeptide is DNA mismatch repair protein MutS (Streptococcus pyogenes serotype M28 (strain MGAS6180)).